We begin with the raw amino-acid sequence, 430 residues long: MANVVVVGAQWGDEGKGKIVDWLSERADVIARFQGGHNAGHTLVIDGKVYKLSLLPSGIVRPGKLSVIGNGVVLDPWHLVGEIAKLRGEGVEITPDNLMIAENAVLILPLHGELDRARESHNAVAKIGTTGRGIGPAYEDKVGRRAIRVADLADEATLALRVDRLMVHHDALRRGLGIEPIDREALLAQLREIAPQVLPYAKPVWKVMNEMRKAGKRILFEGAQGALLDIDFGTYPFVTSSNVIAGQAATGTGIGPGAIGFVLGIVKAYTTRVGEGPFPAELKDADGERLGERGREFGTVTGRKRRCGWFDAVLVRQTCATSGVSGIALTKLDVLDGFETLKICVGYDLDGERLDHLPIAADQQARCTPIYEELEGWSESTAGARSWADLPGAAVKYVRRIEELIQCPVALLSTSPERDDTILVTDPFED.

GTP-binding positions include 12 to 18 (GDEGKGK) and 40 to 42 (GHT). The active-site Proton acceptor is D13. Residues D13 and G40 each contribute to the Mg(2+) site. IMP-binding positions include 13-16 (DEGK), 38-41 (NAGH), T130, R144, Q224, T239, and R303. H41 functions as the Proton donor in the catalytic mechanism. 299 to 305 (TVTGRKR) provides a ligand contact to substrate. GTP is bound by residues R305, 331–333 (KLD), and 413–415 (STS).

This sequence belongs to the adenylosuccinate synthetase family. As to quaternary structure, homodimer. The cofactor is Mg(2+).

The protein resides in the cytoplasm. The enzyme catalyses IMP + L-aspartate + GTP = N(6)-(1,2-dicarboxyethyl)-AMP + GDP + phosphate + 2 H(+). It functions in the pathway purine metabolism; AMP biosynthesis via de novo pathway; AMP from IMP: step 1/2. Functionally, plays an important role in the de novo pathway of purine nucleotide biosynthesis. Catalyzes the first committed step in the biosynthesis of AMP from IMP. This is Adenylosuccinate synthetase from Cereibacter sphaeroides (strain ATCC 17025 / ATH 2.4.3) (Rhodobacter sphaeroides).